Consider the following 523-residue polypeptide: Glycerate kinase (523 aa).

The residue at position 60 (Ser-60) is a Phosphoserine. Lys-200 is modified (N6-acetyllysine).

It belongs to the glycerate kinase type-2 family.

Its subcellular location is the cytoplasm. It carries out the reaction (R)-glycerate + ATP = (2R)-3-phosphoglycerate + ADP + H(+). This is Glycerate kinase (GLYCTK) from Bos taurus (Bovine).